We begin with the raw amino-acid sequence, 208 residues long: MARYRGPVEKIERRLDADLGLKGERRLSGKSALEKRPFAPGQHGQRRAKISEYGLQLREKQKVKFMYGISEKQFRNYFKEAVRREGNTGAILISLIEQRLDNVVFRMGFATTRANARQFTTHGHVLVDGKKVDIPSYLVKPGQKIEIKEKSKSNPQVVRALELTNQTGMVDWVNVDKDKVFGIFTRIPAREEVVIPVEERLIVELYSK.

One can recognise an S4 RNA-binding domain in the interval 98–161; sequence QRLDNVVFRM…KSNPQVVRAL (64 aa).

This sequence belongs to the universal ribosomal protein uS4 family. As to quaternary structure, part of the 30S ribosomal subunit. Contacts protein S5. The interaction surface between S4 and S5 is involved in control of translational fidelity.

Its function is as follows. One of the primary rRNA binding proteins, it binds directly to 16S rRNA where it nucleates assembly of the body of the 30S subunit. Functionally, with S5 and S12 plays an important role in translational accuracy. The chain is Small ribosomal subunit protein uS4 from Aliarcobacter butzleri (strain RM4018) (Arcobacter butzleri).